Reading from the N-terminus, the 368-residue chain is mRNA export factor (368 aa).

A disordered region spans residues 15–34 (TSMFGSTTTDNHNPMKDIEV). WD repeat units follow at residues 37-79 (SPDD…QTIP), 84-114 (MHTG…KMWD), 125-157 (QHDA…KFWD), 168-206 (QLPE…EFRR), 215-255 (HRCV…KDNF), 271-301 (QDIY…SFWD), and 310-346 (TSEQ…EFYN). Phosphothreonine is present on T229.

Belongs to the WD repeat rae1 family. As to quaternary structure, interacts with NUMA1 (via N-terminal end of the coiled-coil domain); this interaction promotes spindle formation in mitosis. Interacts with NUP98. Interacts with MYCBP2. Interacts with USP11.

The protein resides in the cytoplasm. It is found in the nucleus. It localises to the cytoskeleton. The protein localises to the spindle pole. In terms of biological role, plays a role in mitotic bipolar spindle formation. Binds mRNA. May function in nucleocytoplasmic transport and in directly or indirectly attaching cytoplasmic mRNPs to the cytoskeleton. The sequence is that of mRNA export factor (Rae1) from Mus musculus (Mouse).